The chain runs to 1037 residues: Ribonuclease E (1037 aa).

Disordered stretches follow at residues 1 to 23 (MAEDAHTEDLSTQTPQQEGLPER), 47 to 90 (FDGR…ETPV), and 106 to 369 (VSEA…PILS). The segment covering 47-67 (FDGRQRSAHSTVDKADAERVR) has biased composition (basic and acidic residues). 2 stretches are compositionally biased toward low complexity: residues 68–90 (AALTESPAAETPPEEAPAAETPV) and 106–126 (VSEAGPAEPAEPAEPEAPAAE). 2 stretches are compositionally biased toward acidic residues: residues 127–141 (AEAEAETEVADEAET) and 196–226 (VVDDEDEDDDTETGAESDFDSGADSDSDDDQ). A compositionally biased stretch (basic residues) spans 230–242 (PRRRRRGRRGRGR). Residues 248–284 (NDDATSDADTDSTEDQTDGDEQESGEDSDDSGDEDST) show a composition bias toward acidic residues. Residues 291 to 301 (RRRRRRRRRKS) show a composition bias toward basic residues. Residues 320 to 335 (VHERAPRTERSDKSDD) are compositionally biased toward basic and acidic residues. The 78-residue stretch at 427–504 (GNIYLGIVQN…GHKGARLTTQ (78 aa)) folds into the S1 motif domain. Residues 561–589 (EDIRSDVERLQKRWSEIEAKAAEVTEKKA) adopt a coiled-coil conformation. Aspartate 694 and aspartate 738 together coordinate Mg(2+). Residues cysteine 796 and cysteine 799 each coordinate Zn(2+). The disordered stretch occupies residues 810–1037 (PIDSASSNGG…ARPAGPPSHD (228 aa)). Basic residues predominate over residues 834–843 (RRGKRGKKGA). Positions 844-864 (ARTEEVHVAKVPDHTPGEHPM) are enriched in basic and acidic residues. Positions 879-891 (EDHEDHEDHETAE) are enriched in acidic residues. A compositionally biased stretch (basic and acidic residues) spans 897–913 (EVRDDTRDEHDADERAH). Positions 923-1006 (GDEDLDDSDE…DSDSDEDEEP (84 aa)) are enriched in acidic residues.

This sequence belongs to the RNase E/G family. As to quaternary structure, assembles into a homotetramer formed by a dimer of dimers. Interacts with DNA-binding protein HhupB. Requires Mg(2+) as cofactor. Zn(2+) serves as cofactor.

It is found in the cytoplasm. The enzyme catalyses Endonucleolytic cleavage of single-stranded RNA in A- and U-rich regions.. In terms of biological role, endoribonuclease that plays a central role in RNA processing and decay. Plays a major role in pre-16S rRNA maturation, probably generating the mature 5'-end, and a minor role in pre-5S and pre-23S rRNA maturation. Probably also processes tRNA. RNase E and HupB jointly contribute to cellular adaptation to changing growth conditions and survival during antibiotic treatment. Overexpression or depletion leads to changes in gene expression; overexpression induces metabolic slowdown and cell stress while depleted strains grow less well than induced strains. In Mycolicibacterium smegmatis (strain ATCC 700084 / mc(2)155) (Mycobacterium smegmatis), this protein is Ribonuclease E (rne).